The chain runs to 428 residues: Putative zinc finger protein 355P (428 aa).

The KRAB domain maps to 1 to 64 (MRDEVAEKEK…KHPGLTQHNI (64 aa)). C2H2-type zinc fingers lie at residues 72-94 (YKCK…QRIH), 100-122 (YKCE…MRAH), and 128-150 (YKCE…KRIH). The C2H2-type 4; degenerate zinc finger occupies 156–178 (YKFEECDKAFYWVLSFTKHMIIH). The segment at 184-206 (YKYQECGKAFKWSSNLTIHKRIH) adopts a C2H2-type 5; degenerate zinc-finger fold. The segment at 212-234 (CKCEECGKACKQSLGLTIQKRIH) adopts a C2H2-type 6; degenerate zinc-finger fold. The C2H2-type 7; degenerate zinc-finger motif lies at 263 to 285 (YNCEKCGKAFYCSSNLIQNNIVH). 2 consecutive C2H2-type zinc fingers follow at residues 291–313 (YKCQ…KIIH) and 335–357 (YKCE…MIVH). A C2H2-type 10; degenerate zinc finger spans residues 363–385 (YKCEECGKAFKWSSELTIHQRIR). The C2H2-type 11 zinc-finger motif lies at 391-413 (YKCEECVRVFKHSSKLNEHKRNH).

The protein belongs to the krueppel C2H2-type zinc-finger protein family.

It localises to the nucleus. Functionally, may be involved in transcriptional regulation. The sequence is that of Putative zinc finger protein 355P (ZNF355P) from Homo sapiens (Human).